We begin with the raw amino-acid sequence, 475 residues long: TOM1-like protein 1 (475 aa).

Residues 22 to 154 (ATFAGVQTED…DLLKKGVQFP (133 aa)) enclose the VHS domain. The tract at residues 155-175 (PLDGEPETKQEAGQISPSRPT) is disordered. Positions 165–175 (EAGQISPSRPT) are enriched in polar residues. A Phosphoserine modification is found at serine 170. The 89-residue stretch at 199-287 (EQIGKLHSEL…AILGYERFTR (89 aa)) folds into the GAT domain. The interval 296-317 (KRNPTEANQTSSEPSAPSCDLL) is disordered. Residues 300-310 (TEANQTSSEPS) show a composition bias toward polar residues. A Phosphoserine modification is found at serine 313. The interval 392 to 395 (YDNF) is interaction with GRB2. The short motif at 421-425 (LPPLP) is the SH3-binding element. Residues 442–445 (YEVM) are interaction with PIK3R1. Tyrosine 458 is modified (phosphotyrosine). Positions 458 to 461 (YEEI) match the SH2-binding motif.

This sequence belongs to the TOM1 family. As to quaternary structure, interacts with the SH2 and SH3 domains of FYN when phosphorylated. Also interacts with GRB2 and PIK3R1 when phosphorylated. Interacts with LYN. Phosphorylated on tyrosines by FYN and LYN.

It is found in the golgi apparatus. Its subcellular location is the golgi stack. The protein localises to the endosome membrane. The protein resides in the cytoplasm. It localises to the membrane. Functionally, probable adapter protein involved in signaling pathways. Interacts with the SH2 and SH3 domains of various signaling proteins when it is phosphorylated. May promote FYN activation, possibly by disrupting intramolecular SH3-dependent interactions. The sequence is that of TOM1-like protein 1 (Tom1l1) from Rattus norvegicus (Rat).